Reading from the N-terminus, the 95-residue chain is Signal recognition particle 19 kDa protein (95 aa).

Belongs to the SRP19 family. Part of the signal recognition particle protein translocation system, which is composed of SRP and FtsY. Archaeal SRP consists of a 7S RNA molecule of 300 nucleotides and two protein subunits: SRP54 and SRP19.

The protein resides in the cytoplasm. Its function is as follows. Involved in targeting and insertion of nascent membrane proteins into the cytoplasmic membrane. Binds directly to 7S RNA and mediates binding of the 54 kDa subunit of the SRP. The chain is Signal recognition particle 19 kDa protein from Pyrobaculum islandicum (strain DSM 4184 / JCM 9189 / GEO3).